The chain runs to 1216 residues: RAB11-binding protein RELCH (1216 aa).

Residues 1-13 are compositionally biased toward gly residues; that stretch reads MAAMAPGGGGSGS. Disordered stretches follow at residues 1-67 and 133-179; these read MAAM…GSSA and NPGN…NRAG. An N-acetylalanine modification is found at Ala2. 2 positions are modified to phosphoserine: Ser20 and Ser22. The span at 21–31 shows a compositional bias: acidic residues; that stretch reads DSDEDDDEVAA. Residue Thr32 is modified to Phosphothreonine. A phosphoserine mark is found at Ser54 and Ser56. A compositionally biased stretch (low complexity) spans 142–154; the sequence is GTPPGMGAPGIPG. Ser180 and Ser182 each carry phosphoserine. Thr183 carries the post-translational modification Phosphothreonine. Position 186 is a phosphoserine (Ser186). A coiled-coil region spans residues 197–231; it reads NRETDERVAVLEFELRKAKETIQALRANLTKAAEH. One can recognise a LisH domain in the interval 255 to 287; the sequence is EKRALNFLVNEFLLKNNYKLTSITFSDENDDQD. Positions 358–397 form a coiled coil; it reads LVQKLEDKISLLNNEKWSLMEQIRRLESEMDILKAEHFAT. A Phosphoserine modification is found at Ser385. A disordered region spans residues 409–473; it reads VWSSQKDSED…ELPPSSVSNK (65 aa). The segment covering 429-440 has biased composition (basic and acidic residues); that stretch reads DQEKTKDVHLEI. Ser453 bears the Phosphoserine mark. Positions 497-779 are interaction with RAB11A and RAB11B; the sequence is CRMSADSRLG…SSKAKLHGEV (283 aa). 2 HEAT repeats span residues 601–639 and 640–679; these read LLPQ…RSSL and VLSM…KYQQ. Ser792 carries the post-translational modification Phosphoserine. The HEAT 3 repeat unit spans residues 1004-1042; the sequence is VVPALITLSSDPEISVRIATIPAFGTIMETVIQRELLER. A Phosphoserine modification is found at Ser1149.

Interacts with RAB11A (VIA-GTP form). Interacts with RAB11B. Interacts (via the third HEAT repeat) with OSBP (via C-terminus). Found in a complex composed of RELCH, OSBP1 and RAB11A.

It is found in the recycling endosome. The protein localises to the golgi apparatus. The protein resides in the trans-Golgi network. Its function is as follows. Regulates intracellular cholesterol distribution from recycling endosomes to the trans-Golgi network through interactions with RAB11 and OSBP. Functions in membrane tethering and promotes OSBP-mediated cholesterol transfer between RAB11-bound recycling endosomes and OSBP-bound Golgi-like membranes. This is RAB11-binding protein RELCH (Relch) from Mus musculus (Mouse).